The following is a 198-amino-acid chain: NAD(P)H dehydrogenase (quinone) (198 aa).

Residues 4–189 (VLVLYYSMYG…ALARYQGRHV (186 aa)) enclose the Flavodoxin-like domain. Residues 10–15 (SMYGHV) and 78–80 (TRF) each bind FMN. NAD(+) is bound at residue tyrosine 12. Tryptophan 98 serves as a coordination point for substrate. Residues 113–118 (STGTGG) and histidine 133 each bind FMN.

It belongs to the WrbA family. The cofactor is FMN.

The enzyme catalyses a quinone + NADH + H(+) = a quinol + NAD(+). The catalysed reaction is a quinone + NADPH + H(+) = a quinol + NADP(+). The protein is NAD(P)H dehydrogenase (quinone) of Halorhodospira halophila (strain DSM 244 / SL1) (Ectothiorhodospira halophila (strain DSM 244 / SL1)).